Here is a 489-residue protein sequence, read N- to C-terminus: Palmitoyltransferase ZDHHC14 (489 aa).

Residues 1 to 60 are Cytoplasmic-facing; the sequence is MPPGGGGPMKDCEYSQISTHSSSPMESPHKKKKIAARRKWEVFPGRNKFFCNGRIMMARQ. The helical transmembrane segment at 61–81 threads the bilayer; it reads TGVFYLTLILILVTSGLFFAF. Topologically, residues 82-89 are lumenal; the sequence is DCRYLAEK. Residues 90–110 traverse the membrane as a helical segment; it reads ITPAIPVVGGILFFFVMGTLL. Over 111-208 the chain is Cytoplasmic; sequence RTSFSDPGVL…GNCVGKRNYR (98 aa). A DHHC domain is found at 165–215; the sequence is KYCFTCKIFRPPRASHCSLCDNCVEQFDHHCPWVGNCVGKRNYRFFYMFIL. The S-palmitoyl cysteine intermediate role is filled by Cys195. A helical membrane pass occupies residues 209–229; it reads FFYMFILSLSFLTVFIFAFVI. The Lumenal portion of the chain corresponds to 230–255; that stretch reads THVIHRSQQKGFLDALKDSPASVLEA. A helical membrane pass occupies residues 256–276; it reads VICFFSVWSIIGLSGFHTYLI. At 277–489 the chain is on the cytoplasmic side; it reads SSNQTTNEDI…VRGLVKLSSV (213 aa). The segment at 434-454 is disordered; the sequence is HGGHQFLTPDEAPSPPRMLGA. The residue at position 456 (Ser456) is a Phosphoserine.

It belongs to the DHHC palmitoyltransferase family. ERF2/ZDHHC9 subfamily.

It localises to the endoplasmic reticulum membrane. The protein localises to the golgi apparatus membrane. It catalyses the reaction L-cysteinyl-[protein] + hexadecanoyl-CoA = S-hexadecanoyl-L-cysteinyl-[protein] + CoA. Palmitoyltransferase that could catalyze the addition of palmitate onto various protein substrates. May have a palmitoyltransferase activity toward the beta-2 adrenergic receptor/ADRB2 and thereby regulate G protein-coupled receptor signaling. May play a role in cell differentiation and apoptosis. This Mus musculus (Mouse) protein is Palmitoyltransferase ZDHHC14.